Reading from the N-terminus, the 397-residue chain is Argininosuccinate synthase (397 aa).

Residues 9–17 and alanine 35 contribute to the ATP site; that span reads AFSGGLDTS. 2 residues coordinate L-citrulline: tyrosine 88 and serine 93. Glycine 117 contacts ATP. L-aspartate contacts are provided by threonine 119, asparagine 123, and aspartate 124. Position 123 (asparagine 123) interacts with L-citrulline. Arginine 127 contacts L-citrulline.

It belongs to the argininosuccinate synthase family. Type 1 subfamily. Homotetramer.

It is found in the cytoplasm. The enzyme catalyses L-citrulline + L-aspartate + ATP = 2-(N(omega)-L-arginino)succinate + AMP + diphosphate + H(+). Its pathway is amino-acid biosynthesis; L-arginine biosynthesis; L-arginine from L-ornithine and carbamoyl phosphate: step 2/3. The chain is Argininosuccinate synthase from Xanthomonas campestris pv. campestris (strain ATCC 33913 / DSM 3586 / NCPPB 528 / LMG 568 / P 25).